A 177-amino-acid polypeptide reads, in one-letter code: Large ribosomal subunit protein uL6 (177 aa).

The protein belongs to the universal ribosomal protein uL6 family. Part of the 50S ribosomal subunit.

Functionally, this protein binds to the 23S rRNA, and is important in its secondary structure. It is located near the subunit interface in the base of the L7/L12 stalk, and near the tRNA binding site of the peptidyltransferase center. This is Large ribosomal subunit protein uL6 from Ralstonia pickettii (strain 12J).